Reading from the N-terminus, the 55-residue chain is Large ribosomal subunit protein bL33 (55 aa).

This sequence belongs to the bacterial ribosomal protein bL33 family.

This Gluconobacter oxydans (strain 621H) (Gluconobacter suboxydans) protein is Large ribosomal subunit protein bL33.